The chain runs to 416 residues: Multifunctional CCA protein (416 aa).

The ATP site is built by Gly-8 and Arg-11. Residues Gly-8 and Arg-11 each contribute to the CTP site. Mg(2+) contacts are provided by Asp-21 and Asp-23. ATP-binding residues include Arg-91, Arg-138, and Arg-141. CTP is bound by residues Arg-91, Arg-138, and Arg-141. The HD domain occupies Thr-229–Phe-331.

It belongs to the tRNA nucleotidyltransferase/poly(A) polymerase family. Bacterial CCA-adding enzyme type 1 subfamily. Monomer. Can also form homodimers and oligomers. It depends on Mg(2+) as a cofactor. Requires Ni(2+) as cofactor.

It carries out the reaction a tRNA precursor + 2 CTP + ATP = a tRNA with a 3' CCA end + 3 diphosphate. It catalyses the reaction a tRNA with a 3' CCA end + 2 CTP + ATP = a tRNA with a 3' CCACCA end + 3 diphosphate. In terms of biological role, catalyzes the addition and repair of the essential 3'-terminal CCA sequence in tRNAs without using a nucleic acid template. Adds these three nucleotides in the order of C, C, and A to the tRNA nucleotide-73, using CTP and ATP as substrates and producing inorganic pyrophosphate. tRNA 3'-terminal CCA addition is required both for tRNA processing and repair. Also involved in tRNA surveillance by mediating tandem CCA addition to generate a CCACCA at the 3' terminus of unstable tRNAs. While stable tRNAs receive only 3'-terminal CCA, unstable tRNAs are marked with CCACCA and rapidly degraded. This is Multifunctional CCA protein from Xylella fastidiosa (strain 9a5c).